Reading from the N-terminus, the 674-residue chain is Translation initiation factor IF-2 (674 aa).

The 171-residue stretch at 174-344 folds into the tr-type G domain; sequence IRPPVVTVMG…LLVAELREIK (171 aa). Residues 183–190 form a G1 region; it reads GHVDHGKT. 183 to 190 lines the GTP pocket; the sequence is GHVDHGKT. The interval 208 to 212 is G2; it reads GITQS. The tract at residues 229 to 232 is G3; that stretch reads DTPG. GTP is bound by residues 229–233 and 283–286; these read DTPGH and NKID. The interval 283–286 is G4; the sequence is NKID. Positions 320 to 322 are G5; the sequence is SAR.

The protein belongs to the TRAFAC class translation factor GTPase superfamily. Classic translation factor GTPase family. IF-2 subfamily.

Its subcellular location is the cytoplasm. Its function is as follows. One of the essential components for the initiation of protein synthesis. Protects formylmethionyl-tRNA from spontaneous hydrolysis and promotes its binding to the 30S ribosomal subunits. Also involved in the hydrolysis of GTP during the formation of the 70S ribosomal complex. The protein is Translation initiation factor IF-2 of Pseudothermotoga lettingae (strain ATCC BAA-301 / DSM 14385 / NBRC 107922 / TMO) (Thermotoga lettingae).